The chain runs to 96 residues: Small ribosomal subunit protein bS20 (96 aa).

Belongs to the bacterial ribosomal protein bS20 family.

In terms of biological role, binds directly to 16S ribosomal RNA. This Thermotoga petrophila (strain ATCC BAA-488 / DSM 13995 / JCM 10881 / RKU-1) protein is Small ribosomal subunit protein bS20.